The primary structure comprises 562 residues: NAD-dependent malic enzyme (562 aa).

Residue Tyr-101 is the Proton donor of the active site. Arg-154 serves as a coordination point for NAD(+). Residue Lys-172 is the Proton acceptor of the active site. Residues Glu-243, Asp-244, and Asp-267 each coordinate a divalent metal cation. Residues Asp-267 and Asn-415 each coordinate NAD(+).

The protein belongs to the malic enzymes family. Homotetramer. It depends on Mg(2+) as a cofactor. Mn(2+) is required as a cofactor.

The enzyme catalyses (S)-malate + NAD(+) = pyruvate + CO2 + NADH. It catalyses the reaction oxaloacetate + H(+) = pyruvate + CO2. The polypeptide is NAD-dependent malic enzyme (Aliivibrio salmonicida (strain LFI1238) (Vibrio salmonicida (strain LFI1238))).